The chain runs to 117 residues: DNA-directed RNA polymerase II subunit RPB11 (117 aa).

M1 carries the post-translational modification N-acetylmethionine.

The protein belongs to the archaeal Rpo11/eukaryotic RPB11/RPC19 RNA polymerase subunit family. In terms of assembly, component of the RNA polymerase II (Pol II) core complex consisting of 12 subunits: a ten-subunit catalytic core composed of POLR2A/RPB1, POLR2B/RPB2, POLR2C/RPB3, POLR2I/RPB9, POLR2J/RPB11, POLR2E/RPABC1, POLR2F/RPABC2, POLR2H/RPABC3, POLR2K/RPABC4 and POLR2L/RPABC5 and a mobile stalk composed of two subunits POLR2D/RPB4 and POLR2G/RPB7, protruding from the core and functioning primarily in transcription initiation. Part of Pol II(G) complex, in which Pol II core associates with an additional subunit POLR2M; unlike conventional Pol II, Pol II(G) functions as a transcriptional repressor. Part of TBP-based Pol II pre-initiation complex (PIC), in which Pol II core assembles with general transcription factors and other specific initiation factors including GTF2E1, GTF2E2, GTF2F1, GTF2F2, TCEA1, ERCC2, ERCC3, GTF2H2, GTF2H3, GTF2H4, GTF2H5, GTF2A1, GTF2A2, GTF2B and TBP; this large multi-subunit PIC complex mediates DNA unwinding and targets Pol II core to the transcription start site where the first phosphodiester bond forms. Interacts with PTPN6; this interaction promotes the recruitment of RNA pol II to the PCK1 promoter.

It localises to the nucleus. In terms of biological role, DNA-dependent RNA polymerase catalyzes the transcription of DNA into RNA using the four ribonucleoside triphosphates as substrates. Component of RNA polymerase II which synthesizes mRNA precursors and many functional non-coding RNAs. Pol II is the central component of the basal RNA polymerase II transcription machinery. It is composed of mobile elements that move relative to each other. POLR2J/RPB11 is part of the core element with the central large cleft. The protein is DNA-directed RNA polymerase II subunit RPB11 (POLR2J) of Bos taurus (Bovine).